A 392-amino-acid polypeptide reads, in one-letter code: GTPase Obg (392 aa).

One can recognise an Obg domain in the interval 1 to 159 (MKFVDEAEIR…RNLKLELMLL (159 aa)). The tract at residues 121–146 (GFHGLGNTRFKSSTNRAPRQKTNGTP) is disordered. Positions 129–145 (RFKSSTNRAPRQKTNGT) are enriched in polar residues. Positions 160–333 (ADVGLLGMPN…LCNDVMDFIE (174 aa)) constitute an OBG-type G domain. GTP-binding positions include 166–173 (GMPNAGKS), 191–195 (FTTLV), 213–216 (DIPG), 283–286 (NKVD), and 314–316 (SAF). Serine 173 and threonine 193 together coordinate Mg(2+).

It belongs to the TRAFAC class OBG-HflX-like GTPase superfamily. OBG GTPase family. As to quaternary structure, monomer. Mg(2+) serves as cofactor.

The protein localises to the cytoplasm. In terms of biological role, an essential GTPase which binds GTP, GDP and possibly (p)ppGpp with moderate affinity, with high nucleotide exchange rates and a fairly low GTP hydrolysis rate. Plays a role in control of the cell cycle, stress response, ribosome biogenesis and in those bacteria that undergo differentiation, in morphogenesis control. In Alteromonas mediterranea (strain DSM 17117 / CIP 110805 / LMG 28347 / Deep ecotype), this protein is GTPase Obg.